The following is a 261-amino-acid chain: Cytosolic Fe-S cluster assembly factor Nubp2 homolog (261 aa).

14 to 21 (GKGGVGKS) is an ATP binding site. Residues C188 and C191 each contribute to the [4Fe-4S] cluster site.

The protein belongs to the Mrp/NBP35 ATP-binding proteins family. NUBP2/CFD1 subfamily. Heterotetramer of 2 Nubp1 and 2 Nubp2 chains. [4Fe-4S] cluster is required as a cofactor.

It is found in the cytoplasm. Functionally, component of the cytosolic iron-sulfur (Fe/S) protein assembly (CIA) machinery. Required for maturation of extramitochondrial Fe-S proteins. The Nubp1-Nubp2 heterotetramer forms a Fe-S scaffold complex, mediating the de novo assembly of an Fe-S cluster and its transfer to target apoproteins. This Drosophila willistoni (Fruit fly) protein is Cytosolic Fe-S cluster assembly factor Nubp2 homolog.